We begin with the raw amino-acid sequence, 432 residues long: D-amino acid dehydrogenase (432 aa).

Residue 3 to 17 (VVILGSGVVGVASAW) participates in FAD binding.

It belongs to the DadA oxidoreductase family. It depends on FAD as a cofactor.

It catalyses the reaction a D-alpha-amino acid + A + H2O = a 2-oxocarboxylate + AH2 + NH4(+). It participates in amino-acid degradation; D-alanine degradation; NH(3) and pyruvate from D-alanine: step 1/1. Functionally, oxidative deamination of D-amino acids. The protein is D-amino acid dehydrogenase of Shigella boydii serotype 4 (strain Sb227).